Consider the following 277-residue polypeptide: Probable cytochrome c oxidase subunit 3 (277 aa).

Helical transmembrane passes span 20–40 (PWPILTSFALLILVAGGVSFM), 45–65 (FNHYILAFGVISVAYCLYSWW), 88–108 (IGMALFILTEIMFFGVFFASF), 173–193 (CVTALGLTIILGIFFTCMQAY), 211–231 (FYLATGFHGAHVIIGTIFLIV), and 255–275 (AWYWHFVDVVWLFLFTFVYIF).

The protein belongs to the cytochrome c oxidase subunit 3 family.

Its subcellular location is the cell membrane. The enzyme catalyses 4 Fe(II)-[cytochrome c] + O2 + 8 H(+)(in) = 4 Fe(III)-[cytochrome c] + 2 H2O + 4 H(+)(out). In Rickettsia bellii (strain RML369-C), this protein is Probable cytochrome c oxidase subunit 3 (ctaE).